The sequence spans 242 residues: 7-cyano-7-deazaguanine synthase (242 aa).

The segment at 1–25 (MNSRKDKNSKGKNSDTKRKKSSQEN) is disordered. 32 to 42 (LSGGLDSTTCL) is a binding site for ATP. The Zn(2+) site is built by cysteine 212, cysteine 221, cysteine 224, and cysteine 227.

Belongs to the QueC family. Requires Zn(2+) as cofactor.

It carries out the reaction 7-carboxy-7-deazaguanine + NH4(+) + ATP = 7-cyano-7-deazaguanine + ADP + phosphate + H2O + H(+). It participates in purine metabolism; 7-cyano-7-deazaguanine biosynthesis. In terms of biological role, catalyzes the ATP-dependent conversion of 7-carboxy-7-deazaguanine (CDG) to 7-cyano-7-deazaguanine (preQ(0)). The polypeptide is 7-cyano-7-deazaguanine synthase (Leptospira borgpetersenii serovar Hardjo-bovis (strain JB197)).